Consider the following 195-residue polypeptide: Interferon tau-9 (195 aa).

Residues 1-23 (MAFVLSLLMALVLVSYGPGGSLG) form the signal peptide. Intrachain disulfides connect Cys-24/Cys-122 and Cys-52/Cys-162.

The protein belongs to the alpha/beta interferon family. IFN-alphaII subfamily. In terms of tissue distribution, constitutively and exclusively expressed in the mononuclear cells of the extraembryonic trophectoderm.

The protein resides in the secreted. Functionally, paracrine hormone primarily responsible for maternal recognition of pregnancy. Interacts with endometrial receptors, probably type I interferon receptors, and blocks estrogen receptor expression, preventing the estrogen-induced increase in oxytocin receptor expression in the endometrium. This results in the suppression of the pulsatile endometrial release of the luteolytic hormone prostaglandin F2-alpha, hindering the regression of the corpus luteum (luteolysis) and therefore a return to ovarian cyclicity. This, and a possible direct effect of IFN-tau on prostaglandin synthesis, leads in turn to continued ovarian progesterone secretion, which stimulates the secretion by the endometrium of the nutrients required for the growth of the conceptus. In summary, displays particularly high antiviral and antiproliferative potency concurrently with particular weak cytotoxicity, high antiluteolytic activity and immunomodulatory properties. In contrast with other IFNs, IFN-tau is not virally inducible. This chain is Interferon tau-9 (IFNT9), found in Ovis aries (Sheep).